Here is a 203-residue protein sequence, read N- to C-terminus: Urease accessory protein UreG (203 aa).

10-17 (GPVGAGKT) lines the GTP pocket.

Belongs to the SIMIBI class G3E GTPase family. UreG subfamily. Homodimer. UreD, UreF and UreG form a complex that acts as a GTP-hydrolysis-dependent molecular chaperone, activating the urease apoprotein by helping to assemble the nickel containing metallocenter of UreC. The UreE protein probably delivers the nickel.

It is found in the cytoplasm. Functionally, facilitates the functional incorporation of the urease nickel metallocenter. This process requires GTP hydrolysis, probably effectuated by UreG. The sequence is that of Urease accessory protein UreG from Micrococcus luteus (strain ATCC 4698 / DSM 20030 / JCM 1464 / CCM 169 / CCUG 5858 / IAM 1056 / NBRC 3333 / NCIMB 9278 / NCTC 2665 / VKM Ac-2230) (Micrococcus lysodeikticus).